A 228-amino-acid polypeptide reads, in one-letter code: ATP-dependent dethiobiotin synthetase BioD 1 (228 aa).

13–18 is an ATP binding site; that stretch reads EVGKTV. Position 17 (threonine 17) interacts with Mg(2+). The active site involves lysine 38. Residue serine 42 participates in substrate binding. Residues aspartate 55, 116-119, 176-177, and 205-207 each bind ATP; these read EGAG, ND, and PWL. Mg(2+) contacts are provided by aspartate 55 and glutamate 116.

Belongs to the dethiobiotin synthetase family. Homodimer. It depends on Mg(2+) as a cofactor.

Its subcellular location is the cytoplasm. The enzyme catalyses (7R,8S)-7,8-diammoniononanoate + CO2 + ATP = (4R,5S)-dethiobiotin + ADP + phosphate + 3 H(+). It participates in cofactor biosynthesis; biotin biosynthesis; biotin from 7,8-diaminononanoate: step 1/2. Catalyzes a mechanistically unusual reaction, the ATP-dependent insertion of CO2 between the N7 and N8 nitrogen atoms of 7,8-diaminopelargonic acid (DAPA, also called 7,8-diammoniononanoate) to form a ureido ring. This chain is ATP-dependent dethiobiotin synthetase BioD 1, found in Salmonella typhi.